A 375-amino-acid polypeptide reads, in one-letter code: Putative glycyl-radical enzyme activating enzyme MJ0021 (375 aa).

Positions 23-246 (QCVKGGKLVL…LKVIKEFKGD (224 aa)) constitute a Radical SAM core domain. [4Fe-4S] cluster is bound by residues cysteine 38, cysteine 42, and cysteine 45. S-adenosyl-L-methionine contacts are provided by residues 44-46 (YCP) and glycine 87.

The protein belongs to the organic radical-activating enzymes family. [4Fe-4S] cluster serves as cofactor.

The enzyme catalyses glycyl-[protein] + reduced [flavodoxin] + S-adenosyl-L-methionine = glycin-2-yl radical-[protein] + semiquinone [flavodoxin] + 5'-deoxyadenosine + L-methionine + H(+). The protein is Putative glycyl-radical enzyme activating enzyme MJ0021 of Methanocaldococcus jannaschii (strain ATCC 43067 / DSM 2661 / JAL-1 / JCM 10045 / NBRC 100440) (Methanococcus jannaschii).